We begin with the raw amino-acid sequence, 693 residues long: Polyribonucleotide nucleotidyltransferase (693 aa).

Positions 489 and 495 each coordinate Mg(2+). The KH domain occupies 556–615 (PQIHVMNINPAKIKDVVGRGGATVKGIVEKTGAQIDTSDSGEVKVFAKDKKSMDMAVAMI). One can recognise an S1 motif domain in the interval 625–693 (GQVYKGKIVK…GRVKLSLVAR (69 aa)).

Belongs to the polyribonucleotide nucleotidyltransferase family. In terms of assembly, component of the RNA degradosome, which is a multiprotein complex involved in RNA processing and mRNA degradation. The cofactor is Mg(2+).

The protein localises to the cytoplasm. It carries out the reaction RNA(n+1) + phosphate = RNA(n) + a ribonucleoside 5'-diphosphate. Functionally, involved in mRNA degradation. Catalyzes the phosphorolysis of single-stranded polyribonucleotides processively in the 3'- to 5'-direction. This is Polyribonucleotide nucleotidyltransferase from Francisella tularensis subsp. tularensis (strain FSC 198).